The chain runs to 373 residues: 8-amino-7-oxononanoate synthase (373 aa).

R16 is a binding site for substrate. Residue 93-94 participates in pyridoxal 5'-phosphate binding; it reads GF. H118 contributes to the substrate binding site. Pyridoxal 5'-phosphate-binding positions include S165, 190–193, and 222–225; these read DEAH and TFSK. K225 bears the N6-(pyridoxal phosphate)lysine mark. T334 contributes to the substrate binding site.

Belongs to the class-II pyridoxal-phosphate-dependent aminotransferase family. BioF subfamily. In terms of assembly, homodimer. It depends on pyridoxal 5'-phosphate as a cofactor.

It carries out the reaction 6-carboxyhexanoyl-[ACP] + L-alanine + H(+) = (8S)-8-amino-7-oxononanoate + holo-[ACP] + CO2. The protein operates within cofactor biosynthesis; biotin biosynthesis. Catalyzes the decarboxylative condensation of pimeloyl-[acyl-carrier protein] and L-alanine to produce 8-amino-7-oxononanoate (AON), [acyl-carrier protein], and carbon dioxide. The chain is 8-amino-7-oxononanoate synthase from Helicobacter pylori (strain ATCC 700392 / 26695) (Campylobacter pylori).